A 121-amino-acid chain; its full sequence is Small ribosomal subunit protein uS13 (121 aa).

The disordered stretch occupies residues 92 to 121 (KRGLPVRGQRTRTNARTRKGPRRAAASLKK).

Belongs to the universal ribosomal protein uS13 family. As to quaternary structure, part of the 30S ribosomal subunit. Forms a loose heterodimer with protein S19. Forms two bridges to the 50S subunit in the 70S ribosome.

Functionally, located at the top of the head of the 30S subunit, it contacts several helices of the 16S rRNA. In the 70S ribosome it contacts the 23S rRNA (bridge B1a) and protein L5 of the 50S subunit (bridge B1b), connecting the 2 subunits; these bridges are implicated in subunit movement. Contacts the tRNAs in the A and P-sites. The protein is Small ribosomal subunit protein uS13 of Bordetella bronchiseptica (strain ATCC BAA-588 / NCTC 13252 / RB50) (Alcaligenes bronchisepticus).